We begin with the raw amino-acid sequence, 316 residues long: Ribose-phosphate pyrophosphokinase (316 aa).

ATP contacts are provided by residues 39–41 (DGE) and 98–99 (RQ). Residues His-133 and Asp-172 each contribute to the Mg(2+) site. Lys-195 is an active-site residue. D-ribose 5-phosphate contacts are provided by residues Arg-197, Asp-221, and 225-229 (DTGGT).

The protein belongs to the ribose-phosphate pyrophosphokinase family. Class I subfamily. Homohexamer. It depends on Mg(2+) as a cofactor.

Its subcellular location is the cytoplasm. It catalyses the reaction D-ribose 5-phosphate + ATP = 5-phospho-alpha-D-ribose 1-diphosphate + AMP + H(+). It participates in metabolic intermediate biosynthesis; 5-phospho-alpha-D-ribose 1-diphosphate biosynthesis; 5-phospho-alpha-D-ribose 1-diphosphate from D-ribose 5-phosphate (route I): step 1/1. Functionally, involved in the biosynthesis of the central metabolite phospho-alpha-D-ribosyl-1-pyrophosphate (PRPP) via the transfer of pyrophosphoryl group from ATP to 1-hydroxyl of ribose-5-phosphate (Rib-5-P). The chain is Ribose-phosphate pyrophosphokinase from Ralstonia nicotianae (strain ATCC BAA-1114 / GMI1000) (Ralstonia solanacearum).